Reading from the N-terminus, the 238-residue chain is Leucine-rich repeat-containing protein 57 (238 aa).

LRR repeat units follow at residues 39 to 60 (NLRTIDLSSNKIEVVPPMMGKF), 62 to 84 (LLKSLSLNNNRISRLPDELCKLK), 85 to 106 (KLETLHLNGNQISQLPADFVQL), 108 to 129 (ALKTLNLSGNRLKTLPAQLFKL), 131 to 152 (NLDVVDLSKNRIQAIPDEVSGL), 153 to 175 (QAIELNLNQNQISQISVNISHCP), 176 to 196 (RLKVLRLEENCLELSMLPPSI), and 201 to 221 (QISLLAVEGNLFEIKKLRDLE).

The sequence is that of Leucine-rich repeat-containing protein 57 (lrrc57) from Xenopus laevis (African clawed frog).